The chain runs to 650 residues: Pentatricopeptide repeat-containing protein At1g51965, mitochondrial (650 aa).

The N-terminal 23 residues, 1 to 23, are a transit peptide targeting the mitochondrion; sequence MKLLRRRFFNSVNTITRPNRRHY. PPR repeat units follow at residues 132–169, 170–200, 202–236, 237–267, 269–303, 304–338, 339–369, 371–405, 406–440, 441–475, 476–510, 511–545, 546–580, and 581–615; these read DPFL…NVHG, NIST…WDLK, NSFT…GHKL, DIFA…RHCR, DEYT…GLTL, NVVG…GCRP, NEYT…SKRY, TQGI…PVKG, ERDS…GVVT, DTMM…GPSP, DIFT…DCKP, DIIS…GLNP, DVVT…GCQP, and NIVT…GLTP.

The protein belongs to the PPR family. P subfamily.

It localises to the mitochondrion. The protein is Pentatricopeptide repeat-containing protein At1g51965, mitochondrial of Arabidopsis thaliana (Mouse-ear cress).